The following is a 163-amino-acid chain: S-ribosylhomocysteine lyase (163 aa).

Fe cation contacts are provided by H54, H58, and C128.

This sequence belongs to the LuxS family. As to quaternary structure, homodimer. It depends on Fe cation as a cofactor.

It catalyses the reaction S-(5-deoxy-D-ribos-5-yl)-L-homocysteine = (S)-4,5-dihydroxypentane-2,3-dione + L-homocysteine. Functionally, involved in the synthesis of autoinducer 2 (AI-2) which is secreted by bacteria and is used to communicate both the cell density and the metabolic potential of the environment. The regulation of gene expression in response to changes in cell density is called quorum sensing. Catalyzes the transformation of S-ribosylhomocysteine (RHC) to homocysteine (HC) and 4,5-dihydroxy-2,3-pentadione (DPD). This Wolinella succinogenes (strain ATCC 29543 / DSM 1740 / CCUG 13145 / JCM 31913 / LMG 7466 / NCTC 11488 / FDC 602W) (Vibrio succinogenes) protein is S-ribosylhomocysteine lyase.